The chain runs to 464 residues: Probable 1,4-beta-D-glucan cellobiohydrolase C (464 aa).

The N-terminal stretch at 1 to 19 is a signal peptide; sequence MKNFAPSLALSLLLPTVQA. Residues 20 to 55 form the CBM1 domain; the sequence is QQTMWGQCGGAGWSGATDCVAGGVCSTQNAYYAQCL. 2 cysteine pairs are disulfide-bonded: Cys-27/Cys-44 and Cys-38/Cys-54. A thr-rich linker region spans residues 59–102; the sequence is TTATTLSTTSKGTTTTTTSSTTSTGGGSSSTTTKTSTSAGPTVT. A compositionally biased stretch (low complexity) spans 65 to 100; it reads STTSKGTTTTTTSSTTSTGGGSSSTTTKTSTSAGPT. The segment at 65–108 is disordered; sequence STTSKGTTTTTTSSTTSTGGGSSSTTTKTSTSAGPTVTGSPSGN. A catalytic region spans residues 103 to 464; that stretch reads GSPSGNPFSG…QLLTNANPAF (362 aa). Asp-194 is an active-site residue. Cystine bridges form between Cys-195-Cys-254 and Cys-386-Cys-433. The active-site Proton donor is Asp-240. The Nucleophile role is filled by Asp-419.

The protein belongs to the glycosyl hydrolase 6 (cellulase B) family.

It localises to the secreted. It catalyses the reaction Hydrolysis of (1-&gt;4)-beta-D-glucosidic linkages in cellulose and cellotetraose, releasing cellobiose from the non-reducing ends of the chains.. The biological conversion of cellulose to glucose generally requires three types of hydrolytic enzymes: (1) Endoglucanases which cut internal beta-1,4-glucosidic bonds; (2) Exocellobiohydrolases that cut the disaccharide cellobiose from the non-reducing end of the cellulose polymer chain; (3) Beta-1,4-glucosidases which hydrolyze the cellobiose and other short cello-oligosaccharides to glucose. This Aspergillus clavatus (strain ATCC 1007 / CBS 513.65 / DSM 816 / NCTC 3887 / NRRL 1 / QM 1276 / 107) protein is Probable 1,4-beta-D-glucan cellobiohydrolase C (cbhC).